The following is a 95-amino-acid chain: Co-chaperonin GroES (95 aa).

This sequence belongs to the GroES chaperonin family. In terms of assembly, heptamer of 7 subunits arranged in a ring. Interacts with the chaperonin GroEL.

The protein resides in the cytoplasm. In terms of biological role, together with the chaperonin GroEL, plays an essential role in assisting protein folding. The GroEL-GroES system forms a nano-cage that allows encapsulation of the non-native substrate proteins and provides a physical environment optimized to promote and accelerate protein folding. GroES binds to the apical surface of the GroEL ring, thereby capping the opening of the GroEL channel. This is Co-chaperonin GroES from Alkalilimnicola ehrlichii (strain ATCC BAA-1101 / DSM 17681 / MLHE-1).